Reading from the N-terminus, the 338-residue chain is Phenylalanine--tRNA ligase alpha subunit (338 aa).

Mg(2+) is bound at residue glutamate 253.

This sequence belongs to the class-II aminoacyl-tRNA synthetase family. Phe-tRNA synthetase alpha subunit type 1 subfamily. Tetramer of two alpha and two beta subunits. Mg(2+) serves as cofactor.

Its subcellular location is the cytoplasm. It carries out the reaction tRNA(Phe) + L-phenylalanine + ATP = L-phenylalanyl-tRNA(Phe) + AMP + diphosphate + H(+). In Geobacter metallireducens (strain ATCC 53774 / DSM 7210 / GS-15), this protein is Phenylalanine--tRNA ligase alpha subunit.